A 558-amino-acid chain; its full sequence is NAD-dependent malic enzyme 2 (558 aa).

The active-site Proton donor is the tyrosine 101. Arginine 154 is an NAD(+) binding site. Lysine 172 serves as the catalytic Proton acceptor. Residues glutamate 243, aspartate 244, and aspartate 267 each coordinate a divalent metal cation. 2 residues coordinate NAD(+): aspartate 267 and asparagine 411.

The protein belongs to the malic enzymes family. As to quaternary structure, homotetramer. It depends on Mg(2+) as a cofactor. Mn(2+) is required as a cofactor.

It carries out the reaction (S)-malate + NAD(+) = pyruvate + CO2 + NADH. The catalysed reaction is oxaloacetate + H(+) = pyruvate + CO2. This is NAD-dependent malic enzyme 2 from Photobacterium profundum (strain SS9).